We begin with the raw amino-acid sequence, 790 residues long: N-methylputrescine oxidase 1, peroxisomal (790 aa).

Residues 1 to 23 (MATTKQKVTAPSPSPSSSTASCC) are disordered. Residues 9–23 (TAPSPSPSSSTASCC) show a composition bias toward low complexity. Residue 423 to 434 (AFDAGEDGLGKN) coordinates substrate. D425 (proton acceptor) is an active-site residue. A disulfide bond links C444 and C470. 506-511 (VANYEY) is a binding site for substrate. The active-site Schiff-base intermediate with substrate; via topaquinone is Y509. Residue Y509 is modified to 2',4',5'-topaquinone. H559 and H561 together coordinate Cu cation. Mn(2+) contacts are provided by D714 and I715. A Cu cation-binding site is contributed by H725.

Belongs to the copper/topaquinone oxidase family. In terms of assembly, homodimer. Requires Cu cation as cofactor. The cofactor is Zn(2+). It depends on L-topaquinone as a cofactor. Post-translationally, topaquinone (TPQ) is generated by copper-dependent autoxidation of a specific tyrosyl residue. Mainly expressed in roots, and, to a lower extent, in stems.

The protein resides in the peroxisome. The catalysed reaction is a primary methyl amine + O2 + H2O = an aldehyde + H2O2 + NH4(+). It carries out the reaction N-methylputrescine + O2 + H2O = 4-methylaminobutanal + H2O2 + NH4(+). It participates in alkaloid biosynthesis; nicotine biosynthesis. In terms of biological role, involved in the biosynthesis of pyridine alkaloid natural products, leading mainly to the production of anabasine, anatabine, nicotine and nornicotine, effective deterrents against herbivores with antiparasitic and pesticide properties (neurotoxins); nornicotine serves as the precursor in the synthesis of the carcinogen compound N'-nitrosonornicotine (NNN). Amine oxidase which mediates the deamination of N-methylputrescine to produce 4-methylaminobutanal. Oxidizes preferentially N-methylated amines. The polypeptide is N-methylputrescine oxidase 1, peroxisomal (Nicotiana tabacum (Common tobacco)).